The sequence spans 303 residues: tRNA dimethylallyltransferase (303 aa).

11-18 (GPTGVGKS) lines the ATP pocket. A substrate-binding site is contributed by 13–18 (TGVGKS). Interaction with substrate tRNA regions lie at residues 36–39 (DSRQ) and 159–163 (QRVLR).

It belongs to the IPP transferase family. As to quaternary structure, monomer. It depends on Mg(2+) as a cofactor.

It catalyses the reaction adenosine(37) in tRNA + dimethylallyl diphosphate = N(6)-dimethylallyladenosine(37) in tRNA + diphosphate. Catalyzes the transfer of a dimethylallyl group onto the adenine at position 37 in tRNAs that read codons beginning with uridine, leading to the formation of N6-(dimethylallyl)adenosine (i(6)A). The chain is tRNA dimethylallyltransferase from Lawsonia intracellularis (strain PHE/MN1-00).